The sequence spans 193 residues: Holliday junction branch migration complex subunit RuvA (193 aa).

The tract at residues 1–64 (MIGRIAGILL…EDAHLLYGFL (64 aa)) is domain I. Residues 65–139 (TPQERTTFRE…GKLGADLGAL (75 aa)) form a domain II region. The interval 139–143 (LAGAA) is flexible linker. The tract at residues 144 to 193 (SASDHATDILNALLALGYSEKEGLAAIKNVPAGTGVSEGIKLALKALSKA) is domain III.

The protein belongs to the RuvA family. As to quaternary structure, homotetramer. Forms an RuvA(8)-RuvB(12)-Holliday junction (HJ) complex. HJ DNA is sandwiched between 2 RuvA tetramers; dsDNA enters through RuvA and exits via RuvB. An RuvB hexamer assembles on each DNA strand where it exits the tetramer. Each RuvB hexamer is contacted by two RuvA subunits (via domain III) on 2 adjacent RuvB subunits; this complex drives branch migration. In the full resolvosome a probable DNA-RuvA(4)-RuvB(12)-RuvC(2) complex forms which resolves the HJ.

Its subcellular location is the cytoplasm. Its function is as follows. The RuvA-RuvB-RuvC complex processes Holliday junction (HJ) DNA during genetic recombination and DNA repair, while the RuvA-RuvB complex plays an important role in the rescue of blocked DNA replication forks via replication fork reversal (RFR). RuvA specifically binds to HJ cruciform DNA, conferring on it an open structure. The RuvB hexamer acts as an ATP-dependent pump, pulling dsDNA into and through the RuvAB complex. HJ branch migration allows RuvC to scan DNA until it finds its consensus sequence, where it cleaves and resolves the cruciform DNA. In Burkholderia cenocepacia (strain HI2424), this protein is Holliday junction branch migration complex subunit RuvA.